A 318-amino-acid polypeptide reads, in one-letter code: Putative 2-hydroxyacid dehydrogenase SSP0606 (318 aa).

NAD(+) is bound by residues 156–157 (EI), 235–237 (ASR), and Asp-261. Residue Arg-237 is part of the active site. Residue Glu-266 is part of the active site. His-284 serves as the catalytic Proton donor. 284–287 (HIGN) contributes to the NAD(+) binding site.

This sequence belongs to the D-isomer specific 2-hydroxyacid dehydrogenase family.

This is Putative 2-hydroxyacid dehydrogenase SSP0606 from Staphylococcus saprophyticus subsp. saprophyticus (strain ATCC 15305 / DSM 20229 / NCIMB 8711 / NCTC 7292 / S-41).